We begin with the raw amino-acid sequence, 86 residues long: Ferredoxin YfhL (86 aa).

4Fe-4S ferredoxin-type domains are found at residues 1 to 29 and 31 to 65; these read MALL…MGDH and YEIN…KDPA. Residues C9, C12, C15, C19, C38, C41, C50, and C54 each contribute to the [4Fe-4S] cluster site.

[4Fe-4S] cluster is required as a cofactor.

In terms of biological role, ferredoxins are iron-sulfur proteins that transfer electrons in a wide variety of metabolic reactions. The chain is Ferredoxin YfhL (yfhL) from Escherichia coli (strain K12).